Reading from the N-terminus, the 235-residue chain is Segregation and condensation protein A (235 aa).

The protein belongs to the ScpA family. As to quaternary structure, component of a cohesin-like complex composed of ScpA, ScpB and the Smc homodimer, in which ScpA and ScpB bind to the head domain of Smc. The presence of the three proteins is required for the association of the complex with DNA.

The protein resides in the cytoplasm. Its function is as follows. Participates in chromosomal partition during cell division. May act via the formation of a condensin-like complex containing Smc and ScpB that pull DNA away from mid-cell into both cell halves. In Streptococcus agalactiae serotype III (strain NEM316), this protein is Segregation and condensation protein A.